We begin with the raw amino-acid sequence, 165 residues long: Crossover junction endodeoxyribonuclease RuvC (165 aa).

Residues Asp6, Glu67, and Asp142 contribute to the active site. Mg(2+) is bound by residues Asp6, Glu67, and Asp142.

Belongs to the RuvC family. Homodimer which binds Holliday junction (HJ) DNA. The HJ becomes 2-fold symmetrical on binding to RuvC with unstacked arms; it has a different conformation from HJ DNA in complex with RuvA. In the full resolvosome a probable DNA-RuvA(4)-RuvB(12)-RuvC(2) complex forms which resolves the HJ. Requires Mg(2+) as cofactor.

It is found in the cytoplasm. The enzyme catalyses Endonucleolytic cleavage at a junction such as a reciprocal single-stranded crossover between two homologous DNA duplexes (Holliday junction).. The RuvA-RuvB-RuvC complex processes Holliday junction (HJ) DNA during genetic recombination and DNA repair. Endonuclease that resolves HJ intermediates. Cleaves cruciform DNA by making single-stranded nicks across the HJ at symmetrical positions within the homologous arms, yielding a 5'-phosphate and a 3'-hydroxyl group; requires a central core of homology in the junction. The consensus cleavage sequence is 5'-(A/T)TT(C/G)-3'. Cleavage occurs on the 3'-side of the TT dinucleotide at the point of strand exchange. HJ branch migration catalyzed by RuvA-RuvB allows RuvC to scan DNA until it finds its consensus sequence, where it cleaves and resolves the cruciform DNA. In Chlamydia abortus (strain DSM 27085 / S26/3) (Chlamydophila abortus), this protein is Crossover junction endodeoxyribonuclease RuvC.